The sequence spans 278 residues: Undecaprenyl-diphosphatase 1 (278 aa).

The next 7 helical transmembrane spans lie at 1–21, 43–63, 83–103, 112–132, 192–212, 224–244, and 257–277; these read MFFG…TEFL, AFTT…VVLL, IWAT…IGFL, LMNW…FIFI, FSFF…IGSY, IVIL…VIKW, and FGWY…IGII.

Belongs to the UppP family.

The protein resides in the cell membrane. The catalysed reaction is di-trans,octa-cis-undecaprenyl diphosphate + H2O = di-trans,octa-cis-undecaprenyl phosphate + phosphate + H(+). Functionally, catalyzes the dephosphorylation of undecaprenyl diphosphate (UPP). Confers resistance to bacitracin. The chain is Undecaprenyl-diphosphatase 1 from Oenococcus oeni (strain ATCC BAA-331 / PSU-1).